The following is a 356-amino-acid chain: tRNA N6-adenosine threonylcarbamoyltransferase (356 aa).

Fe cation-binding residues include histidine 110 and histidine 114. Residues 132-136, aspartate 165, glycine 178, aspartate 182, and asparagine 288 contribute to the substrate site; that span reads LVSGG. Fe cation is bound at residue aspartate 316.

It belongs to the KAE1 / TsaD family. Fe(2+) is required as a cofactor.

The protein resides in the cytoplasm. It catalyses the reaction L-threonylcarbamoyladenylate + adenosine(37) in tRNA = N(6)-L-threonylcarbamoyladenosine(37) in tRNA + AMP + H(+). Functionally, required for the formation of a threonylcarbamoyl group on adenosine at position 37 (t(6)A37) in tRNAs that read codons beginning with adenine. Is involved in the transfer of the threonylcarbamoyl moiety of threonylcarbamoyl-AMP (TC-AMP) to the N6 group of A37, together with TsaE and TsaB. TsaD likely plays a direct catalytic role in this reaction. The sequence is that of tRNA N6-adenosine threonylcarbamoyltransferase from Maridesulfovibrio salexigens (strain ATCC 14822 / DSM 2638 / NCIMB 8403 / VKM B-1763) (Desulfovibrio salexigens).